The primary structure comprises 406 residues: UPF0754 membrane protein CYB_2931 (406 aa).

The next 2 helical transmembrane spans lie at 1–21 and 385–405; these read MAFW…YFTN and IVNL…LFLL.

The protein belongs to the UPF0754 family.

It is found in the cell inner membrane. In Synechococcus sp. (strain JA-2-3B'a(2-13)) (Cyanobacteria bacterium Yellowstone B-Prime), this protein is UPF0754 membrane protein CYB_2931.